A 223-amino-acid polypeptide reads, in one-letter code: MRLVIAQCTVDYVGRLTAHLPSARRLLLFKADGSVSVHADDRAYKPLNWMSPPCRLVEQADGETPVWVVENKAGEQLRITVEAIEHDSSHELGVDPGLVKDGVEAHLQALLAEHVELLGAGYTLVRREYMTPIGPVDLLCRDEQGRSVAVEIKRRGEIDGVEQLTRYLELLNRDSLLAPVAGVFAAQQIKPQARTLATDRGIRCLTLDYDKMRGMDSDEFRLF.

Belongs to the NucS endonuclease family.

It is found in the cytoplasm. Its function is as follows. Cleaves both 3' and 5' ssDNA extremities of branched DNA structures. In Mycolicibacterium gilvum (strain PYR-GCK) (Mycobacterium gilvum (strain PYR-GCK)), this protein is Endonuclease NucS.